A 75-amino-acid polypeptide reads, in one-letter code: Brevinin-2SN2 (75 aa).

The N-terminal stretch at 1-22 is a signal peptide; sequence MFTLKKPLLFLFFLGTISLSFC. Residues 23–40 constitute a propeptide, removed in mature form; that stretch reads EEERGADEDDGGEMTEEE. The cysteines at positions 69 and 75 are disulfide-linked.

Belongs to the frog skin active peptide (FSAP) family. Brevinin subfamily. Expressed by the skin glands.

Its subcellular location is the secreted. Antimicrobial peptide. Active against some Gram-negative and a variety of Gram-positive bacterial strains. Active against fungus C.glabrata 090902 but not against C.albicans ATCC 10231. Shows hemolytic activity against human erythrocytes. This is Brevinin-2SN2 from Sylvirana spinulosa (Fine-spined frog).